Reading from the N-terminus, the 294-residue chain is Phosphatidylserine decarboxylase proenzyme (294 aa).

Catalysis depends on charge relay system; for autoendoproteolytic cleavage activity residues aspartate 92, histidine 149, and serine 252. Serine 252 acts as the Schiff-base intermediate with substrate; via pyruvic acid; for decarboxylase activity in catalysis. Position 252 is a pyruvic acid (Ser); by autocatalysis (serine 252).

This sequence belongs to the phosphatidylserine decarboxylase family. PSD-B subfamily. Prokaryotic type I sub-subfamily. Heterodimer of a large membrane-associated beta subunit and a small pyruvoyl-containing alpha subunit. It depends on pyruvate as a cofactor. Is synthesized initially as an inactive proenzyme. Formation of the active enzyme involves a self-maturation process in which the active site pyruvoyl group is generated from an internal serine residue via an autocatalytic post-translational modification. Two non-identical subunits are generated from the proenzyme in this reaction, and the pyruvate is formed at the N-terminus of the alpha chain, which is derived from the carboxyl end of the proenzyme. The autoendoproteolytic cleavage occurs by a canonical serine protease mechanism, in which the side chain hydroxyl group of the serine supplies its oxygen atom to form the C-terminus of the beta chain, while the remainder of the serine residue undergoes an oxidative deamination to produce ammonia and the pyruvoyl prosthetic group on the alpha chain. During this reaction, the Ser that is part of the protease active site of the proenzyme becomes the pyruvoyl prosthetic group, which constitutes an essential element of the active site of the mature decarboxylase.

Its subcellular location is the cell membrane. It catalyses the reaction a 1,2-diacyl-sn-glycero-3-phospho-L-serine + H(+) = a 1,2-diacyl-sn-glycero-3-phosphoethanolamine + CO2. It participates in phospholipid metabolism; phosphatidylethanolamine biosynthesis; phosphatidylethanolamine from CDP-diacylglycerol: step 2/2. In terms of biological role, catalyzes the formation of phosphatidylethanolamine (PtdEtn) from phosphatidylserine (PtdSer). This Bordetella avium (strain 197N) protein is Phosphatidylserine decarboxylase proenzyme.